Here is an 853-residue protein sequence, read N- to C-terminus: G-type lectin S-receptor-like serine/threonine-protein kinase SRK (853 aa).

Positions 1–31 (MRGELPNKHHSYTFFVFLFFFLILFPDLSIS) are cleaved as a signal peptide. Over 32–441 (VNTLSATESL…FGERRTIRGK (410 aa)) the chain is Extracellular. Residues 34-154 (TLSATESLTI…KINESDEFLW (121 aa)) enclose the Bulb-type lectin domain. Asn46, Asn120, Asn147, and Asn243 each carry an N-linked (GlcNAc...) asparagine glycan. An EGF-like; atypical domain is found at 293-329 (PKDTCDLYGICGPYAYCDMSTSPTCNCIKGFQPLSPQ). Intrachain disulfides connect Cys297–Cys309, Cys303–Cys317, Cys378–Cys403, and Cys382–Cys388. The region spanning 348–428 (CGEDRFFRLM…DGQDLFVRLA (81 aa)) is the PAN domain. Asn387 is a glycosylation site (N-linked (GlcNAc...) asparagine). Residues 442–462 (IIGLIIGISLMLVLSFIIYCF) form a helical membrane-spanning segment. Residues 463-853 (WKKKQKRARA…QITVSVINAR (391 aa)) lie on the Cytoplasmic side of the membrane. The region spanning 524-802 (FSDSNILGRG…PKMSSVVLML (279 aa)) is the Protein kinase domain. ATP is bound by residues 530-538 (LGRGGFGIV) and Lys552. Ser558 carries the post-translational modification Phosphoserine. Residues 613 to 631 (TQSSNKLNWQTRFSIINGI) form a caM-binding region. Asp650 serves as the catalytic Proton acceptor. A phosphoserine mark is found at Ser654 and Ser667. A Phosphothreonine modification is found at Thr684. The tract at residues 807–838 (GEIPQPKRPGYCVGRSSLDTADSSSSTKRDSE) is disordered. The span at 822–832 (SSLDTADSSSS) shows a compositional bias: low complexity. Ser831 carries the post-translational modification Phosphoserine.

It belongs to the protein kinase superfamily. Ser/Thr protein kinase family.

The protein localises to the cell membrane. The enzyme catalyses L-seryl-[protein] + ATP = O-phospho-L-seryl-[protein] + ADP + H(+). It catalyses the reaction L-threonyl-[protein] + ATP = O-phospho-L-threonyl-[protein] + ADP + H(+). Functionally, female specificity determinant of self-incompatibility. This chain is G-type lectin S-receptor-like serine/threonine-protein kinase SRK (SRK), found in Arabidopsis thaliana (Mouse-ear cress).